The primary structure comprises 642 residues: MQSDINKNHLTMTEGLTYINESGLKEEESKNIVGYNINGSIIDLFTPLPTITKEVIPITIDSEDGLEMLRHSAAHILAAAVKNLFPTVKISIGPSIENGFYYDFDAERPFTPEDFPAIEAEMQRIINESIPFERIEISKAEALEFFSSLHENYKVEIINSLEDGNITLYRIGNFTDLCKGPHVPNTNFIKAFKLLSVAGAYWRGNENNQMLSRIYATAFPNKKLLKTYLTQLEEAKRRDHRKLGKELNLFEFHEDIAPGMVFWQPNGMLLRTILEDFLRKEHLKRGYQLVQGPQLLRRELWEKSGHYTNYKENMYFTEIEEDVYGIKPMNCVSHMLLYKTHLHSYRELPQRYFELGVVHRHEKSGVLHGLLRVRQFTQDDAHIICMPEQLEEEIIQVITFVRDLMSLFDFNYHIVISTRPEKSIGSDYAWELATSALIQAVEKINLPYSINHGDGAFYGPKIDIKVTDAIGREWQLSTIQCDFTLPERFELEYVGQDGKRHQPVMIHRAIFGSIERFIGILTEHYAGAFPTWLTPIQVKILTVTDAQTPFAKHVYSQLQDVGIRVGLDIRNEKLGFKIREAQLAKIPYILVIGQKELELESVNVRLRTGENIGMQSVTEFIKLVENDCIQPFKRGGMNYRFS.

Residues 239 to 530 (DHRKLGKELN…LTEHYAGAFP (292 aa)) are catalytic. Zn(2+) contacts are provided by C331, H382, and H507.

Belongs to the class-II aminoacyl-tRNA synthetase family. Homodimer. The cofactor is Zn(2+).

Its subcellular location is the cytoplasm. It catalyses the reaction tRNA(Thr) + L-threonine + ATP = L-threonyl-tRNA(Thr) + AMP + diphosphate + H(+). Functionally, catalyzes the attachment of threonine to tRNA(Thr) in a two-step reaction: L-threonine is first activated by ATP to form Thr-AMP and then transferred to the acceptor end of tRNA(Thr). Also edits incorrectly charged L-seryl-tRNA(Thr). The polypeptide is Threonine--tRNA ligase (Lawsonia intracellularis (strain PHE/MN1-00)).